The primary structure comprises 98 residues: Molybdopterin synthase sulfur carrier subunit (98 aa).

1-thioglycine; alternate is present on G98. G98 is modified (glycyl adenylate; alternate).

It belongs to the MoaD family. MOCS2A subfamily. In terms of assembly, heterotetramer; composed of 2 small (MOCS2A) and 2 large (MOCS2B) subunits. Post-translationally, C-terminal thiocarboxylation occurs in 2 steps, it is first acyl-adenylated (-COAMP) via the hesA/moeB/thiF part of MOCS3, then thiocarboxylated (-COSH) via the rhodanese domain of MOCS3.

It localises to the cytoplasm. Its pathway is cofactor biosynthesis; molybdopterin biosynthesis. Acts as a sulfur carrier required for molybdopterin biosynthesis. Component of the molybdopterin synthase complex that catalyzes the conversion of precursor Z into molybdopterin by mediating the incorporation of 2 sulfur atoms into precursor Z to generate a dithiolene group. In the complex, serves as sulfur donor by being thiocarboxylated (-COSH) at its C-terminus by MOCS3. After interaction with MOCS2B, the sulfur is then transferred to precursor Z to form molybdopterin. The polypeptide is Molybdopterin synthase sulfur carrier subunit (Aedes aegypti (Yellowfever mosquito)).